Consider the following 203-residue polypeptide: ATP-dependent Clp protease proteolytic subunit (203 aa).

Ser-107 serves as the catalytic Nucleophile. The active site involves His-132.

The protein belongs to the peptidase S14 family. In terms of assembly, fourteen ClpP subunits assemble into 2 heptameric rings which stack back to back to give a disk-like structure with a central cavity, resembling the structure of eukaryotic proteasomes.

It is found in the cytoplasm. The enzyme catalyses Hydrolysis of proteins to small peptides in the presence of ATP and magnesium. alpha-casein is the usual test substrate. In the absence of ATP, only oligopeptides shorter than five residues are hydrolyzed (such as succinyl-Leu-Tyr-|-NHMec, and Leu-Tyr-Leu-|-Tyr-Trp, in which cleavage of the -Tyr-|-Leu- and -Tyr-|-Trp bonds also occurs).. Functionally, cleaves peptides in various proteins in a process that requires ATP hydrolysis. Has a chymotrypsin-like activity. Plays a major role in the degradation of misfolded proteins. The protein is ATP-dependent Clp protease proteolytic subunit of Pelagibacter ubique (strain HTCC1062).